The sequence spans 489 residues: Rhamnulokinase (489 aa).

13–17 (ASSGR) provides a ligand contact to ATP. Cysteine 68 and cysteine 222 are joined by a disulfide. Substrate is bound by residues glycine 83 and 236–238 (HDT). The active-site Proton acceptor is the aspartate 237. Threonine 259 contributes to the ATP binding site. Residue asparagine 296 participates in substrate binding. Glutamine 304 contributes to the ATP binding site. A disulfide bridge connects residues cysteine 353 and cysteine 370. Glycine 402 provides a ligand contact to ATP. Cysteine 413 and cysteine 417 are disulfide-bonded.

Belongs to the rhamnulokinase family. In terms of assembly, monomer. It depends on Mg(2+) as a cofactor.

The catalysed reaction is L-rhamnulose + ATP = L-rhamnulose 1-phosphate + ADP + H(+). It functions in the pathway carbohydrate degradation; L-rhamnose degradation; glycerone phosphate from L-rhamnose: step 2/3. Involved in the catabolism of L-rhamnose (6-deoxy-L-mannose). Catalyzes the transfer of the gamma-phosphate group from ATP to the 1-hydroxyl group of L-rhamnulose to yield L-rhamnulose 1-phosphate. This is Rhamnulokinase from Escherichia coli (strain K12 / DH10B).